A 123-amino-acid polypeptide reads, in one-letter code: Large ribosomal subunit protein uL29 (123 aa).

It belongs to the universal ribosomal protein uL29 family.

The polypeptide is Large ribosomal subunit protein uL29 (RPL35) (Babesia bovis).